We begin with the raw amino-acid sequence, 872 residues long: Cilia- and flagella-associated protein 58 (872 aa).

Coiled coils occupy residues 106-595 (VDSA…ADGE) and 642-839 (ESQY…QKNK).

The protein belongs to the CFAP58 family. As to quaternary structure, interacts with ODFP2.

The protein localises to the cell projection. It localises to the cilium. It is found in the flagellum. Its subcellular location is the cytoplasm. The protein resides in the cytoskeleton. The protein localises to the microtubule organizing center. It localises to the centrosome. Functionally, has an essential role in the assembly and organization of the sperm flagellar axoneme. Required for the elongation of the primary cilium and sperm flagellar midpiece via modulation of the Notch signaling pathway. This is Cilia- and flagella-associated protein 58 from Homo sapiens (Human).